A 233-amino-acid chain; its full sequence is Biosynthetic peptidoglycan transglycosylase (233 aa).

Residues 8-28 (LIALPVGIFIFFNAYVYGNII) form a helical membrane-spanning segment.

The protein belongs to the glycosyltransferase 51 family.

It localises to the cell inner membrane. The enzyme catalyses [GlcNAc-(1-&gt;4)-Mur2Ac(oyl-L-Ala-gamma-D-Glu-L-Lys-D-Ala-D-Ala)](n)-di-trans,octa-cis-undecaprenyl diphosphate + beta-D-GlcNAc-(1-&gt;4)-Mur2Ac(oyl-L-Ala-gamma-D-Glu-L-Lys-D-Ala-D-Ala)-di-trans,octa-cis-undecaprenyl diphosphate = [GlcNAc-(1-&gt;4)-Mur2Ac(oyl-L-Ala-gamma-D-Glu-L-Lys-D-Ala-D-Ala)](n+1)-di-trans,octa-cis-undecaprenyl diphosphate + di-trans,octa-cis-undecaprenyl diphosphate + H(+). The protein operates within cell wall biogenesis; peptidoglycan biosynthesis. Its function is as follows. Peptidoglycan polymerase that catalyzes glycan chain elongation from lipid-linked precursors. The sequence is that of Biosynthetic peptidoglycan transglycosylase from Neisseria meningitidis serogroup B (strain ATCC BAA-335 / MC58).